Consider the following 81-residue polypeptide: Large ribosomal subunit protein bL31B (81 aa).

The protein belongs to the bacterial ribosomal protein bL31 family. Type B subfamily. As to quaternary structure, part of the 50S ribosomal subunit.

The polypeptide is Large ribosomal subunit protein bL31B (Lactococcus lactis subsp. cremoris (strain MG1363)).